Consider the following 207-residue polypeptide: Urease accessory protein UreE (207 aa).

Residues 170-194 show a composition bias toward basic and acidic residues; it reads EHHGHSHSHSHDHDHDHDHDHDHQH. A disordered region spans residues 170–207; it reads EHHGHSHSHSHDHDHDHDHDHDHQHGPCCSHGHHHGHR.

It belongs to the UreE family.

Its subcellular location is the cytoplasm. Its function is as follows. Involved in urease metallocenter assembly. Binds nickel. Probably functions as a nickel donor during metallocenter assembly. In Burkholderia pseudomallei (strain 1106a), this protein is Urease accessory protein UreE.